Reading from the N-terminus, the 359-residue chain is Beta-1,3-galactosyltransferase bre-2 (359 aa).

The Cytoplasmic portion of the chain corresponds to 1 to 11; it reads MRQSRRASSRV. The helical; Signal-anchor for type II membrane protein transmembrane segment at 12–29 threads the bilayer; that stretch reads NRLVVIFIIVASGFLLLY. Residues 30–359 lie on the Lumenal side of the membrane; sequence KNTQQFTQID…NPDLEELKEK (330 aa). N-linked (GlcNAc...) asparagine glycans are attached at residues asparagine 73, asparagine 163, and asparagine 209.

It belongs to the glycosyltransferase 31 family.

It localises to the golgi apparatus membrane. Its pathway is protein modification; protein glycosylation. Its function is as follows. Transfers N-acetylgalactosamine onto carbohydrate substrates. Involved in susceptibility to pore-forming crystal toxins in conjunction with bre-1, bre-3, bre-4, and bre-5. Involved in resistance to the nematotoxic C.cinerea galectin Cgl2. The chain is Beta-1,3-galactosyltransferase bre-2 from Caenorhabditis elegans.